A 129-amino-acid polypeptide reads, in one-letter code: Aspartate 1-decarboxylase (129 aa).

S25 (schiff-base intermediate with substrate; via pyruvic acid) is an active-site residue. S25 carries the pyruvic acid (Ser) modification. T57 contributes to the substrate binding site. Y58 acts as the Proton donor in catalysis. 73–75 (GAA) lines the substrate pocket.

Belongs to the PanD family. In terms of assembly, heterooctamer of four alpha and four beta subunits. Pyruvate serves as cofactor. In terms of processing, is synthesized initially as an inactive proenzyme, which is activated by self-cleavage at a specific serine bond to produce a beta-subunit with a hydroxyl group at its C-terminus and an alpha-subunit with a pyruvoyl group at its N-terminus.

The protein resides in the cytoplasm. The enzyme catalyses L-aspartate + H(+) = beta-alanine + CO2. The protein operates within cofactor biosynthesis; (R)-pantothenate biosynthesis; beta-alanine from L-aspartate: step 1/1. Catalyzes the pyruvoyl-dependent decarboxylation of aspartate to produce beta-alanine. The polypeptide is Aspartate 1-decarboxylase (Hydrogenovibrio crunogenus (strain DSM 25203 / XCL-2) (Thiomicrospira crunogena)).